The following is a 375-amino-acid chain: MAADGDWQDFYEFQEPAGSVRDQENCNASPEAGAGAHAGGDSFPALASSLEEKLSLCFRPTSDADPPRAAVRPITERSLLQGDEIWNALTDNYGNVMPVDWKSSHTRTLHLLTLNLTEKGMSDGLPFDTSDEEELREQLDMHSIIVSCVNEEPLFTADQVIEEIEEMMQESPDLEDDETPTQSDRLSMLSQEIQTLKSSSMSSCEERVKRLSVSELNELLEEIETAIKEYSEELVQQLALRDELEFEKEVENSFISALIEVQNKQKEHKETAKKKKKLKNGSSQNGRNERSHMPGTRFSMEGISNVIQNGLRHTFGNSGGEKQYLTTVIPYEKKNGPPSVEDLQILTKILHAMKEDSEKVPSLLTDYILKVLCPT.

Positions 1-42 (MAADGDWQDFYEFQEPAGSVRDQENCNASPEAGAGAHAGGDS) are disordered. Residues Ser-130, Ser-171, and Ser-190 each carry the phosphoserine modification. Residues 156 to 177 (TADQVIEEIEEMMQESPDLEDD) adopt a coiled-coil conformation. Positions 206–281 (ERVKRLSVSE…AKKKKKLKNG (76 aa)) form a coiled coil. The segment at 265–297 (QKEHKETAKKKKKLKNGSSQNGRNERSHMPGTR) is disordered.

It belongs to the zygin family. Homodimer; disulfide-linked. May form heterodimers with FEZ1. Interacts with synaptotagmin.

Functionally, involved in axonal outgrowth and fasciculation. This chain is Fasciculation and elongation protein zeta-2 (Fez2), found in Rattus norvegicus (Rat).